Reading from the N-terminus, the 379-residue chain is Origin of replication complex subunit 2 (379 aa).

The disordered stretch occupies residues 1–25; sequence MALRGGHAAAAAGVSSGSEDDDEEA. Over residues 8 to 17 the composition is skewed to low complexity; sequence AAAAAGVSSG.

The protein belongs to the ORC2 family. As to quaternary structure, component of the origin recognition complex (ORC) composed of at least ORC1, ORC2, ORC3, ORC4, ORC5 and ORC6. ORC is regulated in a cell-cycle and development dependent manner. It is sequentially assembled at the exit from anaphase of mitosis and disassembled as cells enter S phase.

It localises to the nucleus. In terms of biological role, essential protein. Component of the origin recognition complex (ORC) that binds origins of replication. DNA-binding is ATP-dependent, however specific DNA sequences that define origins of replication have not been identified so far. ORC is required to assemble the pre-replication complex necessary to initiate DNA replication. In Oryza sativa subsp. indica (Rice), this protein is Origin of replication complex subunit 2.